The primary structure comprises 460 residues: Ammonium transporter Rh type C (460 aa).

The Cytoplasmic portion of the chain corresponds to 1–9 (MIWNTNLRW). Residues 10-30 (RLPVACLLLEVALIALFGVFV) form a helical membrane-spanning segment. Residues 31 to 61 (RYDMDADPHWVQEKVIKNLSTDLENEFYYRY) lie on the Extracellular side of the membrane. N48 carries N-linked (GlcNAc...) asparagine glycosylation. Residues 62-82 (PSFQDVHVMIFVGFGFLMTFL) traverse the membrane as a helical segment. Over 83-89 (QRYGYSS) the chain is Cytoplasmic. Residues 90-110 (VGFNFLLAAFGIQWALLMQGW) traverse the membrane as a helical segment. Topologically, residues 111 to 125 (LQSFDGRYILVDLEN) are extracellular. Residues 126–145 (LINADFCVGSVCVAFGAVLG) traverse the membrane as a helical segment. The Cytoplasmic segment spans residues 146 to 151 (KVSPVQ). Residues 152-174 (LLIMTLFQVTLFSINEYILLNLL) traverse the membrane as a helical segment. The Extracellular portion of the chain corresponds to 175–179 (EVKDS). Residues 180–200 (GGSMTIHAFGAYFGLTVAWIL) form a helical membrane-spanning segment. Topologically, residues 201–219 (YRPNLHLSKERQSSTYHSD) are cytoplasmic. A helical membrane pass occupies residues 220-240 (LFAMIGTLFLWMYWPSFNSAI). At 241 to 251 (SNHGDAQHRAA) the chain is on the extracellular side. The helical transmembrane segment at 252 to 272 (INTYCSLAACVLTSVALSSAL) threads the bilayer. Topologically, residues 273-285 (HRKGKLDMVHIQN) are cytoplasmic. The chain crosses the membrane as a helical span at residues 286 to 303 (ATLAGGVGLGTVAELMVL). At 304–306 (PFG) the chain is on the extracellular side. The chain crosses the membrane as a helical span at residues 307-329 (SLIIGFVCGIVSTLGFVYLTPFL). Residues 330-346 (ESRLHIQDTCGVHNLHG) are Cytoplasmic-facing. A helical membrane pass occupies residues 347–367 (IPGIIGGIAGAVTASIANIDL). At 368–396 (YGEEGLAYAFGIERSKLNWSPNMQGRFQA) the chain is on the extracellular side. Residues 397 to 417 (AGLFVSLAMALVGGVIVGVIL) form a helical membrane-spanning segment. Over 418–460 (RLPFWGQAPDENCFEDAVYWEIPKEPKSTALRSEDSSIKPPEP) the chain is Cytoplasmic.

The protein belongs to the ammonium transporter (TC 2.A.49) family. Rh subfamily. As to quaternary structure, homotrimer. Post-translationally, N-glycosylated.

The protein resides in the apical cell membrane. It catalyses the reaction NH4(+)(in) = NH4(+)(out). The enzyme catalyses methylamine(out) = methylamine(in). The catalysed reaction is CO2(out) = CO2(in). Ammonium transporter involved in the maintenance of acid-base homeostasis. Transports ammonium and its related derivative methylammonium across the plasma membrane of epithelial cells likely contributing to renal transepithelial ammonia transport and ammonia metabolism. Postulated to primarily mediate an electroneutral bidirectional transport of NH3 ammonia species according to a mechanism that implies interaction of an NH4(+) ion with acidic residues of the pore entry followed by dissociation of NH4(+) into NH3 and H(+). As a result NH3 transits through the central pore and is protonated on the extracellular side reforming NH4(+). May act as a CO2 channel providing for renal acid secretion. The sequence is that of Ammonium transporter Rh type C (RHCG) from Bos taurus (Bovine).